The following is a 504-amino-acid chain: Diacylglycerol O-acyltransferase 1B (504 aa).

The tract at residues 1–72 is disordered; that stretch reads MAISDEPESV…VNSQQQNEKQ (72 aa). Residues 24-41 show a composition bias toward polar residues; sequence SATSTAGLFNSPETTTDS. Low complexity predominate over residues 53–65; the sequence is DDSINSDDAAVNS. 7 helical membrane-spanning segments follow: residues 108–128, 152–172, 184–204, 209–229, 259–279, 301–321, and 348–368; these read HAGL…RLII, WPLF…FIVE, VVVV…VLVI, SAFV…LKLV, YPYN…TLCY, LIIF…PIVQ, and VWLC…AELL. The FYXDWWN motif motif lies at 375–381; the sequence is FYKDWWN. Transmembrane regions (helical) follow at residues 416 to 436, 438 to 458, and 471 to 491; these read AAAL…CIAV, CHIF…LVLI, and VGNM…CVLL. His430 is an active-site residue.

It belongs to the membrane-bound acyltransferase family. Sterol o-acyltransferase subfamily. Highly expressed in flowers and pods. Expressed at low levels in roots, stems and leaves.

The protein localises to the endoplasmic reticulum membrane. The enzyme catalyses an acyl-CoA + a 1,2-diacyl-sn-glycerol = a triacyl-sn-glycerol + CoA. It functions in the pathway glycerolipid metabolism; triacylglycerol biosynthesis. Functionally, major contributors to triacylglycerol (TAG) synthesis and oil accumulation in developing seeds. Catalyzes the acylation of the sn-3 hydroxy group of sn-1,2-diacylglycerol using acyl-CoA. Has a marked preference for oleoyl-CoA and sn-1,2-dioleoylglycerol over vernoloyl-CoA and sn-1,2-divernoloylglycerol. The protein is Diacylglycerol O-acyltransferase 1B of Glycine max (Soybean).